Here is a 144-residue protein sequence, read N- to C-terminus: Large ribosomal subunit protein uL16 (144 aa).

Belongs to the universal ribosomal protein uL16 family. As to quaternary structure, part of the 50S ribosomal subunit.

In terms of biological role, binds 23S rRNA and is also seen to make contacts with the A and possibly P site tRNAs. In Clostridium perfringens (strain ATCC 13124 / DSM 756 / JCM 1290 / NCIMB 6125 / NCTC 8237 / Type A), this protein is Large ribosomal subunit protein uL16.